The following is a 388-amino-acid chain: Chorismate synthase (388 aa).

NADP(+)-binding residues include Arg39 and Arg45. FMN is bound by residues 130–132 (RSS), 251–252 (NA), Ala296, 311–315 (KPIPT), and Arg337.

It belongs to the chorismate synthase family. Homotetramer. The cofactor is FMNH2.

It carries out the reaction 5-O-(1-carboxyvinyl)-3-phosphoshikimate = chorismate + phosphate. The protein operates within metabolic intermediate biosynthesis; chorismate biosynthesis; chorismate from D-erythrose 4-phosphate and phosphoenolpyruvate: step 7/7. Its function is as follows. Catalyzes the anti-1,4-elimination of the C-3 phosphate and the C-6 proR hydrogen from 5-enolpyruvylshikimate-3-phosphate (EPSP) to yield chorismate, which is the branch point compound that serves as the starting substrate for the three terminal pathways of aromatic amino acid biosynthesis. This reaction introduces a second double bond into the aromatic ring system. The protein is Chorismate synthase of Streptococcus equi subsp. zooepidemicus (strain H70).